The following is an 82-amino-acid chain: Small ribosomal subunit protein bS16 (82 aa).

The protein belongs to the bacterial ribosomal protein bS16 family.

This Synechococcus elongatus (strain ATCC 33912 / PCC 7942 / FACHB-805) (Anacystis nidulans R2) protein is Small ribosomal subunit protein bS16.